Consider the following 199-residue polypeptide: MNYILIGLISYFCGAIPFSYLLPKLRKIDIRRTGSGNVGGTNALRAAGPVIGFICMVLDGVKAFVPVLVFSLIFKDIHYTGISSIFAVLGHDFPVFLRFKGGKGVASTTGVFFALCPICGFTFLATWISITLLTKYVSLASIVGMYAASFVAFFFNKDYGVLFLLLSTLSTLRHSENIERLVNKSERKTDLIKIIKKRG.

5 helical membrane passes run 3 to 23, 50 to 70, 77 to 97, 110 to 130, and 136 to 156; these read YILIGLISYFCGAIPFSYLLP, VIGFICMVLDGVKAFVPVLVF, IHYTGISSIFAVLGHDFPVFL, GVFFALCPICGFTFLATWISI, and YVSLASIVGMYAASFVAFFFN.

The protein belongs to the PlsY family. Probably interacts with PlsX.

The protein resides in the cell inner membrane. The enzyme catalyses an acyl phosphate + sn-glycerol 3-phosphate = a 1-acyl-sn-glycero-3-phosphate + phosphate. It functions in the pathway lipid metabolism; phospholipid metabolism. Functionally, catalyzes the transfer of an acyl group from acyl-phosphate (acyl-PO(4)) to glycerol-3-phosphate (G3P) to form lysophosphatidic acid (LPA). This enzyme utilizes acyl-phosphate as fatty acyl donor, but not acyl-CoA or acyl-ACP. This is Glycerol-3-phosphate acyltransferase from Pseudothermotoga lettingae (strain ATCC BAA-301 / DSM 14385 / NBRC 107922 / TMO) (Thermotoga lettingae).